We begin with the raw amino-acid sequence, 366 residues long: Ribosomal RNA large subunit methyltransferase M (366 aa).

Residues serine 188, 221 to 224 (CPGG), aspartate 240, aspartate 260, and aspartate 277 each bind S-adenosyl-L-methionine. The active-site Proton acceptor is lysine 306.

The protein belongs to the class I-like SAM-binding methyltransferase superfamily. RNA methyltransferase RlmE family. RlmM subfamily. In terms of assembly, monomer.

The protein localises to the cytoplasm. The enzyme catalyses cytidine(2498) in 23S rRNA + S-adenosyl-L-methionine = 2'-O-methylcytidine(2498) in 23S rRNA + S-adenosyl-L-homocysteine + H(+). Functionally, catalyzes the 2'-O-methylation at nucleotide C2498 in 23S rRNA. In Shigella flexneri serotype 5b (strain 8401), this protein is Ribosomal RNA large subunit methyltransferase M.